Here is a 308-residue protein sequence, read N- to C-terminus: Glycerol-3-phosphate dehydrogenase [NAD(P)+] (308 aa).

Positions 15, 35, 36, and 83 each coordinate NADPH. Sn-glycerol 3-phosphate-binding residues include Lys83 and Gly111. Position 115 (Ser115) interacts with NADPH. 5 residues coordinate sn-glycerol 3-phosphate: Lys166, Asp219, Ser229, Arg230, and Asn231. Catalysis depends on Lys166, which acts as the Proton acceptor. Arg230 is a binding site for NADPH. NADPH is bound at residue Glu256.

This sequence belongs to the NAD-dependent glycerol-3-phosphate dehydrogenase family.

It is found in the cytoplasm. It catalyses the reaction sn-glycerol 3-phosphate + NAD(+) = dihydroxyacetone phosphate + NADH + H(+). The enzyme catalyses sn-glycerol 3-phosphate + NADP(+) = dihydroxyacetone phosphate + NADPH + H(+). Its pathway is membrane lipid metabolism; glycerophospholipid metabolism. In terms of biological role, catalyzes the reduction of the glycolytic intermediate dihydroxyacetone phosphate (DHAP) to sn-glycerol 3-phosphate (G3P), the key precursor for phospholipid synthesis. The protein is Glycerol-3-phosphate dehydrogenase [NAD(P)+] of Synechococcus elongatus (strain ATCC 33912 / PCC 7942 / FACHB-805) (Anacystis nidulans R2).